The following is a 265-amino-acid chain: MPRLIQLSDPHLVARAEGRVRGRSALSLFQKALAQALQEQPDLLLVTGDCCHDETWCGYVRLRDAVDAAIQQQAARTVCLGFTAGNHDHPQRLRAVLGRHWVVAPGVMDAGCWRLLVVSSHRAGGCAGVIGGVQLSWLNTQLREAETLGKFVVVALHHPPVPIGDASMDTIGLSDGEQLMDSLKRWPAVRVVLFGHIHQHWKGMAAPRSDLSLLGCPSTLVSFHPVQPCPLGRAWDPGGRLLDLMEDGSVQERLMRWSACEQAAG.

The Fe cation site is built by Asp9, His11, Asp49, Asn86, His157, His196, and His198. AMP contacts are provided by residues His11, Asp49, and Asn86–His87. His198 contributes to the AMP binding site.

Belongs to the cyclic nucleotide phosphodiesterase class-III family. Fe(2+) is required as a cofactor.

The sequence is that of Probable cyclic nucleotide phosphodiesterase SynWH7803_1390 from Synechococcus sp. (strain WH7803).